The chain runs to 87 residues: U3-theraphotoxin-Hhn1a 15 (87 aa).

Positions 1–24 are cleaved as a signal peptide; that stretch reads MVNMKASMFLTFAGLVLLLVVCYA. The propeptide occupies 25 to 52; the sequence is SESEEKEFPKEMLSSIFAVDNDFKQEER. 3 cysteine pairs are disulfide-bonded: C54-C67, C61-C72, and C66-C79.

This sequence belongs to the neurotoxin 10 (Hwtx-1) family. 51 (Hntx-8) subfamily. Hntx-8 sub-subfamily. As to expression, expressed by the venom gland.

The protein localises to the secreted. Ion channel inhibitor. The polypeptide is U3-theraphotoxin-Hhn1a 15 (Cyriopagopus hainanus (Chinese bird spider)).